Reading from the N-terminus, the 321-residue chain is tRNA U34 carboxymethyltransferase (321 aa).

Residues Lys-90, Trp-104, Lys-109, Gly-129, 151 to 153 (DPT), 180 to 181 (IE), Met-195, Tyr-199, and Arg-314 contribute to the carboxy-S-adenosyl-L-methionine site.

Belongs to the class I-like SAM-binding methyltransferase superfamily. CmoB family. As to quaternary structure, homotetramer.

The enzyme catalyses carboxy-S-adenosyl-L-methionine + 5-hydroxyuridine(34) in tRNA = 5-carboxymethoxyuridine(34) in tRNA + S-adenosyl-L-homocysteine + H(+). Functionally, catalyzes carboxymethyl transfer from carboxy-S-adenosyl-L-methionine (Cx-SAM) to 5-hydroxyuridine (ho5U) to form 5-carboxymethoxyuridine (cmo5U) at position 34 in tRNAs. The sequence is that of tRNA U34 carboxymethyltransferase from Haemophilus influenzae (strain PittGG).